The chain runs to 508 residues: tRNA(Ile2) 2-agmatinylcytidine synthetase TiaS (508 aa).

The segment at residues 367–427 is a DNA-binding region (OB); it reads ITGGHVLIEL…YQLNIEKINV (61 aa).

This sequence belongs to the TiaS family.

The protein resides in the cytoplasm. The enzyme catalyses cytidine(34) in tRNA(Ile2) + agmatine + ATP + H2O = 2-agmatinylcytidine(34) in tRNA(Ile2) + AMP + 2 phosphate + 2 H(+). ATP-dependent agmatine transferase that catalyzes the formation of 2-agmatinylcytidine (agm2C) at the wobble position (C34) of tRNA(Ile2), converting the codon specificity from AUG to AUA. The chain is tRNA(Ile2) 2-agmatinylcytidine synthetase TiaS from Methanococcus voltae (strain ATCC BAA-1334 / A3).